A 182-amino-acid chain; its full sequence is ATP synthase subunit delta (182 aa).

It belongs to the ATPase delta chain family. In terms of assembly, F-type ATPases have 2 components, F(1) - the catalytic core - and F(0) - the membrane proton channel. F(1) has five subunits: alpha(3), beta(3), gamma(1), delta(1), epsilon(1). F(0) has three main subunits: a(1), b(2) and c(10-14). The alpha and beta chains form an alternating ring which encloses part of the gamma chain. F(1) is attached to F(0) by a central stalk formed by the gamma and epsilon chains, while a peripheral stalk is formed by the delta and b chains.

The protein resides in the cell inner membrane. Functionally, f(1)F(0) ATP synthase produces ATP from ADP in the presence of a proton or sodium gradient. F-type ATPases consist of two structural domains, F(1) containing the extramembraneous catalytic core and F(0) containing the membrane proton channel, linked together by a central stalk and a peripheral stalk. During catalysis, ATP synthesis in the catalytic domain of F(1) is coupled via a rotary mechanism of the central stalk subunits to proton translocation. Its function is as follows. This protein is part of the stalk that links CF(0) to CF(1). It either transmits conformational changes from CF(0) to CF(1) or is implicated in proton conduction. This is ATP synthase subunit delta from Persephonella marina (strain DSM 14350 / EX-H1).